Consider the following 314-residue polypeptide: GTP cyclohydrolase FolE2 (314 aa).

The segment at 290–314 (DASAWSAPQASAPDQQESFATGNER) is disordered. Over residues 291-305 (ASAWSAPQASAPDQQ) the composition is skewed to low complexity.

This sequence belongs to the GTP cyclohydrolase IV family.

The catalysed reaction is GTP + H2O = 7,8-dihydroneopterin 3'-triphosphate + formate + H(+). It functions in the pathway cofactor biosynthesis; 7,8-dihydroneopterin triphosphate biosynthesis; 7,8-dihydroneopterin triphosphate from GTP: step 1/1. In terms of biological role, converts GTP to 7,8-dihydroneopterin triphosphate. The protein is GTP cyclohydrolase FolE2 of Pseudomonas putida (strain ATCC 700007 / DSM 6899 / JCM 31910 / BCRC 17059 / LMG 24140 / F1).